A 1981-amino-acid chain; its full sequence is Nonribosomal peptide synthetase rstn8 (1981 aa).

The tract at residues 251-638 (SYAALEQESA…ELGEIEYQAS (388 aa)) is adenylation. A Carrier 1 domain is found at 763–840 (HHAGQKYDEM…ELFHRSQKTP (78 aa)). Residue Ser-800 is modified to O-(pantetheine 4'-phosphoryl)serine. The segment at 883–1293 (EDIYPCSPLQ…DASMGTILSQ (411 aa)) is condensation 1. A Carrier 2 domain is found at 1438-1514 (EPLLPLEATL…CLASTLNSRP (77 aa)). At Ser-1475 the chain carries O-(pantetheine 4'-phosphoryl)serine. A condensation 1 region spans residues 1586–1978 (EEQIDLVSFA…TFAQSIERII (393 aa)). Residues 1754 to 1774 (HHHHQHEGRQHHGASETNGNR) are disordered.

The protein belongs to the NRP synthetase family. Requires pantetheine 4'-phosphate as cofactor.

It carries out the reaction 2 L-tryptophan = cyclo(L-Trp-L-Trp) + 2 H2O. It functions in the pathway alkaloid biosynthesis. Nonribosomal peptide synthetase; part of the gene cluster that mediates the biosynthesis of okaramine B, a prenylated indole alkaloid that possesses an unusual octacyclic ring system, including a four-membered azetidine ring and an eight-membered azocine ring, and that exhibits insecticidal activity against silkworm larvae. Within the pathway, okaA acts as a bimodular non-ribosomal peptide synthetase (NRPS) that condenses two tryptophan molecules into cyclo(L-Trp-L-Trp). Prenylation by the prenyltransferase okaC then leads to the formation of cyclo(N8-(alpha,alpha-dimethylallyl)-L-Trp-6a-(alpha,alpha-dime-thylallyl)-L-Trp). This is followed by indole 2,3-epoxidation by the FAD-dependent monooxygenase okaB to facilitate the formation of the hexahydropyrrolo[2,3-b]indole (HPI) moiety of okaramine C. The cytochrome P450 monooxygenase okaD then likely catalyzes formation of the eight-membered ring of okaramine A. The dioxygenase okaE further forms the unusual 2-dimethyl-3-methyl-azetidine ring to yield 12-deshydroxyl okaramine E, as well as the hydroxylation of 12-deshydroxyl okaramine E to produce okaramine E. The cytochrome P450 monoxygenase okaG converts 12-deshydroxyl okaramine E into 3-desmethyl okaramine B which is further methylated by the methyltransferase okaF into okaramine B. In a shunt pathway, okaG and okaF together are also able to convert okaramine E into okaramine D. Okaramine H is produced by nonenzymatic conversion from okaramine A. The polypeptide is Nonribosomal peptide synthetase rstn8 (Penicillium ochrochloron).